The primary structure comprises 395 residues: MEDVSESDNNVETSIIHLPDDCLSFIFQRLDSVADHDSFGLTCHRWLNIQNISRRSLQFQCSFSVLNPSSLSQTNPDVSSHHLHRLLTRFQWLEHLSLSGCTVLNDSSLDSLRYPGARLHTLYLDCCFGISDDGISTIASFCPNLSVVSLYRCNISDIGLETLARASLSLKCVNLSYCPLVSDFGIKALSQACLQLESVKISNCKSITGVGFSGCSPTLGYVDADSCQLEPKGITGIISGGGIEFLNISGVSCYIRKDGLVPIGSGIASKLRILNLRMCRTVGDESIEAIAKGCPLLQEWNLALCHEVKISGWEAVGKWCRNLKKLHVNRCRNLCDQGLLALRCGCMNLQILYMNGNARLTPTAIEMFRLHRADITLRTEEMMVIGPDWRLYAQE.

One can recognise an F-box domain in the interval 13-61 (TSIIHLPDDCLSFIFQRLDSVADHDSFGLTCHRWLNIQNISRRSLQFQC). LRR repeat units follow at residues 75-100 (NPDV…SLSG), 101-126 (CTVL…YLDC), 127-152 (CFGI…SLYR), 154-177 (NISD…NLSY), 178-203 (CPLV…KISN), 226-250 (SCQL…NISG), 252-278 (SCYI…NLRM), 279-304 (CRTV…NLAL), 305-330 (CHEV…HVNR), and 331-356 (CRNL…YMNG).

This chain is F-box/LRR-repeat protein 12 (FBL12), found in Arabidopsis thaliana (Mouse-ear cress).